The primary structure comprises 466 residues: Ferrochelatase-1, chloroplastic/mitochondrial (466 aa).

Positions 1 to 11 are enriched in polar residues; the sequence is MQATALSSGFN. A disordered region spans residues 1–23; that stretch reads MQATALSSGFNPLTKRKDHRFPR. Residues 1-35 constitute a chloroplast and mitochondrion transit peptide; the sequence is MQATALSSGFNPLTKRKDHRFPRSCSQRNSLSLIQ.

This sequence belongs to the ferrochelatase family. In terms of tissue distribution, expressed in roots, leaves, stems and flowers. Present in both leaves and roots.

It localises to the plastid. The protein localises to the chloroplast membrane. The protein resides in the chloroplast thylakoid membrane. Its subcellular location is the mitochondrion. The catalysed reaction is heme b + 2 H(+) = protoporphyrin IX + Fe(2+). The protein operates within porphyrin-containing compound metabolism; protoheme biosynthesis; protoheme from protoporphyrin-IX: step 1/1. In terms of biological role, catalyzes the last step of heme biosynthesis by inserting ferrous iron into protoporphyrin IX to produce protoheme. Produces heme for photosynthetic cytochromes, but does not seem to be involved in stress responses. May be involved in wound-induced supply of heme to defensive hemoproteins outside plastids. Regulates the expression of photosynthesis-associated nuclear genes in undeveloped chloroplasts through production of heme. This chain is Ferrochelatase-1, chloroplastic/mitochondrial, found in Arabidopsis thaliana (Mouse-ear cress).